The sequence spans 443 residues: MEPTFDIPDSTDWLDTPLTLLAPFETSLRCQVCKDFFDNPVITSCSHTFCSLCIRRCLSTEGKCPTCRSSDQELKLRRNWVVQELVEGFKNARPSILQLARMAQTGTDDSGDLAAEEPASKKRKIEPNAIVGTDGLPEEGIRTRSQSRGASRQPQATPVQVIDDGNDEDYMPDGLVPCPVCGRRMKEEAVFRHLDSCTGTAEELKPAAFGSLAPGPRKSFLAATGKPPERLPVINYSLLKDTVLRKKLKDLGIPNWGPRALLQRRHTEWLNLWNANCDSRTPKPKRELLRELDVWERTQGGNSVTPTDPTNAVMNKDFNTEEWSANYDTDFKALIANARKKNDAVIRSTIPNASQANSDTPRSAQLVDQPIEASLTPQDVDEKSTMNPQDAIDNRTEVPPVPDPPQALSGIDRAVNSPMKNVTEGDAQAIPISSSASTHKTPH.

An RING-type zinc finger spans residues Cys-30–Arg-68. Residues Gly-106–Thr-157 form a disordered region. The span at Thr-143–Thr-157 shows a compositional bias: polar residues. The segment at Leu-175 to Glu-202 adopts a UBZ4-type zinc-finger fold. Zn(2+)-binding residues include Cys-178, Cys-181, His-193, and Cys-197. In terms of domain architecture, SAP spans Leu-239–Trp-273. 2 stretches are compositionally biased toward polar residues: residues Ile-350 to Ser-363 and Pro-431 to His-443. The disordered stretch occupies residues Ile-350–His-443.

The protein belongs to the RAD18 family. In terms of assembly, interacts with E2 UBC2, forming a complex with ubiquitin ligase activity.

It is found in the nucleus. The catalysed reaction is S-ubiquitinyl-[E2 ubiquitin-conjugating enzyme]-L-cysteine + [acceptor protein]-L-lysine = [E2 ubiquitin-conjugating enzyme]-L-cysteine + N(6)-ubiquitinyl-[acceptor protein]-L-lysine.. The protein operates within protein modification; protein ubiquitination. Its function is as follows. E3 RING-finger protein, member of the UBC2/RAD6 epistasis group. Associates to the E2 ubiquitin conjugating enzyme UBC2/RAD6 to form the UBC2-RAD18 ubiquitin ligase complex involved in postreplicative repair (PRR) of damaged DNA. This is Postreplication repair E3 ubiquitin-protein ligase rad18 (uvsH) from Emericella nidulans (strain FGSC A4 / ATCC 38163 / CBS 112.46 / NRRL 194 / M139) (Aspergillus nidulans).